A 155-amino-acid polypeptide reads, in one-letter code: Ribosome maturation factor RimP (155 aa).

The protein belongs to the RimP family.

It is found in the cytoplasm. Its function is as follows. Required for maturation of 30S ribosomal subunits. The protein is Ribosome maturation factor RimP of Gloeothece citriformis (strain PCC 7424) (Cyanothece sp. (strain PCC 7424)).